Here is a 172-residue protein sequence, read N- to C-terminus: Putative phosphoesterase BCE_1348 (172 aa).

Catalysis depends on His34, which acts as the Proton donor. 2 short sequence motifs (HXTX) span residues 34 to 37 and 115 to 118; these read HITL and HLTI. Residue His115 is the Proton acceptor of the active site.

Belongs to the 2H phosphoesterase superfamily. YjcG family.

The sequence is that of Putative phosphoesterase BCE_1348 from Bacillus cereus (strain ATCC 10987 / NRS 248).